The following is a 386-amino-acid chain: Alanine racemase 1 (386 aa).

The active-site Proton acceptor; specific for D-alanine is K38. K38 is modified (N6-(pyridoxal phosphate)lysine). R136 provides a ligand contact to substrate. Residue Y267 is the Proton acceptor; specific for L-alanine of the active site. M315 serves as a coordination point for substrate.

Belongs to the alanine racemase family. The cofactor is pyridoxal 5'-phosphate.

It carries out the reaction L-alanine = D-alanine. It functions in the pathway amino-acid biosynthesis; D-alanine biosynthesis; D-alanine from L-alanine: step 1/1. Functionally, catalyzes the interconversion of L-alanine and D-alanine. May also act on other amino acids. This is Alanine racemase 1 (alr1) from Clostridium acetobutylicum (strain ATCC 824 / DSM 792 / JCM 1419 / IAM 19013 / LMG 5710 / NBRC 13948 / NRRL B-527 / VKM B-1787 / 2291 / W).